A 622-amino-acid chain; its full sequence is Low affinity potassium transport system protein Kup (622 aa).

Transmembrane regions (helical) follow at residues 9 to 29 (LPAI…TSPL), 49 to 69 (VFGF…IKYL), 103 to 123 (VIMG…TPAI), 137 to 157 (PQLD…LFMI), 165 to 185 (VGKL…GLGL), 213 to 233 (VSFI…ALYA), 247 to 267 (WFTV…ALLL), 276 to 296 (PFFL…AALA), 337 to 357 (IYIP…IVSF), 363 to 383 (LAAA…ILST), 396 to 416 (FVAL…TANL), and 419 to 439 (LLSG…VMTT).

It belongs to the HAK/KUP transporter (TC 2.A.72) family.

It localises to the cell inner membrane. It carries out the reaction K(+)(in) + H(+)(in) = K(+)(out) + H(+)(out). Functionally, responsible for the low-affinity transport of potassium into the cell. Likely operates as a K(+):H(+) symporter. This chain is Low affinity potassium transport system protein Kup, found in Shigella boydii serotype 18 (strain CDC 3083-94 / BS512).